Reading from the N-terminus, the 2431-residue chain is MTSGGSASRSGHRGVPMTSRGFDGSRRGSLRRAGARETASEAADGAAPAAGLRASPCSLASPSAAAAVAAIPADMAAVLQQVLERPELNKLPKSTQNKLEKFLAEQQSEIDCLKGRHEKFKVESEQQYFEIEKRLSQSQERLVTETRECQNLRLELEKLNNQVKVLTEKTKELETAQDRNLGIQSQFTRAKEELEAEKRDLIRTNERLSQEVEYLTEDVKRLNEKLKESNTTKGELQLKLDELQASDVAVKYREKRLEQEKELLHNQNSWLNTELKTKTDELLALGREKGNEILELKCNLENKKEEVLRLEEQMNGLKTSNEHLQKHVEDLLTKLKEAKEQQASMEEKFHNELNAHIKLSNLYKSAADDSEAKSNELTRAVDELHKLLKEAGEANKTIQDHLLQVEESKDQMEKEMLEKIGKLEKELENANDLLSATKRKGAILSEEELAAMSPTAAAVAKIVKPGMKLTELYNAYVETQDQLLLEKQENKRINKYLDEIVKEVEAKAPILKRQREEYERAQKAVASLSAKLEQAMKEIQRLQEDTDKANKHSSVLERDNQRMEIQIKDLSQQIRVLLMELEEARGNHVIRDEEVSSADISSSSEVISQHLVSYRNIEELQQQNQRLLFALRELGETREREEQETTSSKIAELQHKLENSLAELEQLRESRQHQMQLVDSIVRQRDMYRILLSQTTGMAIPLQASSLDDISLLSTPKRSSTSQTVSTPAPEPVIDSTEAIEAKAALKQLQEIFENYKKEKIDSEKLQNEQLEKLQEQVTDLRSQNTKISTQLDFASKRYEMLQDNVEGYRREITSLQERNQKLTATTQKQEQIINTMTQDLRGANEKLAVAEVRAENLKKEKEMLKLSEVRLSQQRESLLAEQRGQNLLLTNLQTIQGILERSETETKQRLNSQIEKLEHEISHLKKKLENEVEQRHTLTRNLDVQLLDTKRQLDTEINLHLNTKELLKNAQKDIATLKQHLNNMEAQLASQSTQRTGKGQPGDRDDVDDLKSQLRQAEEQVNDLKERLKTSTSNVEQYRAMVTSLEDSLNKEKQVTEEVHKNIEVRLKESAEFQTQLEKKLMEVEKEKQELQDDKRKAIESMEQQLSELKKTLSTVQNEVQEALQRASTALSNEQQARRDCQEQAKIAVEAQNKYERELMLHAADVEALQAAKEQVSKMTSIRQHLEETTQKAESQLLECKASWEERERVLKDEVSKSVSRCEDLEKQNRLLHDQIEKLSDKVVTSMKDAVQAPLNVSLNEEGKSQEQILEILRFIRREKEIAETRFEVAQVESLRYRQRVELLERELQELQDSLNVEREKVQVTAKTMAQHEELMKKTETMNVVMETNKMLREEKERLEQNLQQMQAKVRKLELDILPLQEANAELSEKSGMLQAEKKLLEEDVKRWKARNQQLINQQKDPDTEEYRKLLSEKEIHTKRIQQLNEEVGRLKAEIARSNASLTNNQNLIQSLREDLSKARTEKEGIQKDLDAKIIDIQEKVKTITQVKKIGRRYKTQFEELKAQQNKAMETSTQSSGDHQEQHISVQEMQELKDTLSQSETKTKSLEGQVENLQKTLSEKETEARSLQEQTVQLQSELSRLRQDLQDKTTEEQLRQQMNEKTWKTLALAKSKITHLSGVKDQLTKEIEELKQRNGALDQQKDELDVRMTALKSQYEGRISRLERELREHQERHLEQRDEPQEPTNKAPEQQRQITLKTTPASGERGIASTSDPPTANIKPTPVVSTPSKVTAAAMAGNKSTPRASIRPMVTPATVTNPTTTPTATVMPTTQVESQEAMQSEGPVEHVPVFGNASGSVRSTSPNVQPSISQPILTVQQQTQATAFVQPTQQSHPQIEPTNQELSPNIVEVVQSSPVERPSTSTAVFGTVSATPSSSLPKRTREEEEDSTMEAGDQVSEDTVEMPLPKKLKMVTPVGTEEEVMAEESTDGEAETQAYNQDSQDSIGEGVTQGDYTPMEDSEETSQSLQIDLGPLQSDQQTTSSQDGQGKGDDVIVIDSDDEDDDEENDGEHEDYEEDEDDDDDEEDDTGMGDEGEDSNEGTGSADGNDGYEADDAEGGDGTDPGTETEESMGGAESHQRAADSQNSGEGNTSAAESSFSQEVAREQQPTSASERQTPQAPQSPRRPPHPLPPRLTIHAPPQELGPPVQRIQMTRRQSVGRGLQLTPGIGGMQQHFFDDEDRTVPSTPTLVVPHRTDGFAEAIHSPQVAGVPRFRFGPPEDMPQTSSSHSDLGQLASQGGLGMYETPLFLAHEEESGGRSVPTTPLQVAAPVTVFTESTTSDASEHASQSVPMVTTSTGTLSTTNETAAGDDGDEVFVEAESEGISSEAGLEIDSQQEEEPVQASDESDLPSTSQDPPSSSSVDTSSSQPKPFRRVRLQTTLRQGVRGRQFNRQRGISHAMGGRGGINRGNIN.

Residues 1-48 (MTSGGSASRSGHRGVPMTSRGFDGSRRGSLRRAGARETASEAADGAAP) form a disordered region. Residues 77–87 (AVLQQVLERPE) are sufficient for interaction with TPR. The interval 88-191 (LNKLPKSTQN…GIQSQFTRAK (104 aa)) is necessary for interaction with HSF1. The stretch at 98–444 (KLEKFLAEQQ…SATKRKGAIL (347 aa)) forms a coiled coil. An N6-acetyllysine mark is found at Lys326, Lys386, and Lys419. Ser453 is modified (phosphoserine). The stretch at 486-678 (EKQENKRINK…ESRQHQMQLV (193 aa)) forms a coiled coil. Residues Lys502, Lys531, and Lys551 each carry the N6-acetyllysine modification. The segment at 511–587 (LKRQREEYER…LMELEEARGN (77 aa)) is necessary for association to the NPC. A phosphoserine mark is found at Ser596, Ser597, and Ser706. Residues 736 to 1246 (STEAIEAKAA…IEKLSDKVVT (511 aa)) are a coiled coil. Lys787, Lys797, Lys822, and Lys829 each carry N6-acetyllysine. Polar residues predominate over residues 989-998 (LASQSTQRTG). Positions 989 to 1011 (LASQSTQRTGKGQPGDRDDVDDL) are disordered. Residues 1002-1011 (PGDRDDVDDL) show a composition bias toward basic and acidic residues. Ser1259 carries the phosphoserine modification. 2 coiled-coil regions span residues 1289–1494 (EVAQ…LDAK) and 1547–1700 (VQEM…QRDE). Residues 1292–1394 (QVESLRYRQR…NAELSEKSGM (103 aa)) are necessary for interaction with HSF1. Residues 1689-1701 (EHQERHLEQRDEP) are compositionally biased toward basic and acidic residues. Residues 1689 to 1744 (EHQERHLEQRDEPQEPTNKAPEQQRQITLKTTPASGERGIASTSDPPTANIKPTPV) are disordered. Residues 1703-1722 (EPTNKAPEQQRQITLKTTPA) show a composition bias toward polar residues. At Lys1760 the chain carries N6-acetyllysine. At Thr1762 the chain carries Phosphothreonine. Residues 1873-1898 (SSPVERPSTSTAVFGTVSATPSSSLP) are compositionally biased toward polar residues. Positions 1873–2193 (SSPVERPSTS…TPGIGGMQQH (321 aa)) are disordered. The segment at 1882-1937 (STAVFGTVSATPSSSLPKRTREEEEDSTMEAGDQVSEDTVEMPLPKKLKMVTPVGT) is sufficient and essential for mediating its nuclear import. Over residues 1937-1951 (TEEEVMAEESTDGEA) the composition is skewed to acidic residues. The span at 1954–1963 (QAYNQDSQDS) shows a compositional bias: polar residues. Ser1963 bears the Phosphoserine mark. The segment covering 1994–2005 (QSDQQTTSSQDG) has biased composition (low complexity). Acidic residues-rich tracts occupy residues 2016 to 2057 (DSDD…EDSN) and 2067 to 2088 (DGYEADDAEGGDGTDPGTETEE). Residues 2100–2132 (ADSQNSGEGNTSAAESSFSQEVAREQQPTSASE) show a composition bias toward polar residues. Ser2102, Ser2105, Ser2116, Ser2118, and Ser2141 each carry phosphoserine. 2 positions are modified to omega-N-methylarginine: Arg2174 and Arg2179. 2 positions are modified to phosphothreonine: Thr2184 and Thr2205. Ser2223 is subject to Phosphoserine. Arg2231 carries the post-translational modification Omega-N-methylarginine. A compositionally biased stretch (polar residues) spans 2295–2312 (ESTTSDASEHASQSVPMV). The segment at 2295–2431 (ESTTSDASEH…RGGINRGNIN (137 aa)) is disordered. Positions 2313–2325 (TTSTGTLSTTNET) are enriched in low complexity. Positions 2327–2340 (AGDDGDEVFVEAES) are enriched in acidic residues. The span at 2341 to 2351 (EGISSEAGLEI) shows a compositional bias: low complexity. Acidic residues predominate over residues 2353 to 2367 (SQQEEEPVQASDESD). Residues 2368 to 2388 (LPSTSQDPPSSSSVDTSSSQP) are compositionally biased toward low complexity. Asymmetric dimethylarginine is present on residues Arg2411, Arg2413, and Arg2422. Over residues 2420–2431 (GGRGGINRGNIN) the composition is skewed to gly residues.

The protein belongs to the TPR family. As to quaternary structure, homodimer. Part of the nuclear pore complex (NPC). Associates with the XPO1/CRM1-mediated nuclear export complex, the Importin alpha/Importin beta receptor and the dynein 1 complex. Interacts (via C-terminal domain) with the KPNB1; the interaction occurs in a RanGTP-dependent manner. Interacts (via C-terminal region and phosphorylated form) with MAPK1/ERK2 (via phosphorylated form); the interaction requires dimerization of MAPK1/ERK2 and increases following EGF stimulation. Interacts with MAPK3/ERK1; the interaction increases following EGF stimulation. Interacts (via coiled coil region) with NUP153; the interaction is direct. Interacts with HSF1; the interaction increases in a stress-responsive manner and stimulates export of stress-induced HSP70 mRNA. Interacts with huntingtin/HTT; the interaction is inhibited by aggregated huntingtin/HTT forms with expanded polyglutamine stretch. Interacts with MAD1L1 (via N-terminal region), MAD2L1, and TTK; the interactions occurs in a microtubule-independent manner. Interacts (via middle region) with DYNLL1. Interacts with DCTN1, dynein, NUP153 and tubulin. Interacts with MTA1. Interacts with IFI204 (via C-terminal region). Interacts with IFI203. Interacts with ZC3HC1; this interaction mediates ZC3HC1 nuclear envelopes (NE)-association but also required for proper positioning of a substantial amount of TPR at the nuclear basket (NB). Phosphorylated. Phosphorylation occurs on serine and threonine residues (comprised in the C-terminal region) by MAPK1/ERK2 and stabilizes the interaction between these two proteins. Expressed in the heart, liver, kidney, spleen, lung and skeletal muscles.

Its subcellular location is the nucleus. The protein localises to the nucleus membrane. The protein resides in the nucleus envelope. It localises to the nuclear pore complex. It is found in the cytoplasm. Its subcellular location is the cytoskeleton. The protein localises to the spindle. The protein resides in the chromosome. It localises to the centromere. It is found in the kinetochore. Its function is as follows. Component of the nuclear pore complex (NPC), a complex required for the trafficking across the nuclear envelope. Functions as a scaffolding element in the nuclear phase of the NPC essential for normal nucleocytoplasmic transport of proteins and mRNAs, plays a role in the establishment of nuclear-peripheral chromatin compartmentalization in interphase, and in the mitotic spindle checkpoint signaling during mitosis. Involved in the quality control and retention of unspliced mRNAs in the nucleus; in association with NUP153, regulates the nuclear export of unspliced mRNA species bearing constitutive transport element (CTE) in a NXF1- and KHDRBS1-independent manner. Negatively regulates both the association of CTE-containing mRNA with large polyribosomes and translation initiation. Does not play any role in Rev response element (RRE)-mediated export of unspliced mRNAs. Implicated in nuclear export of mRNAs transcribed from heat shock gene promoters; associates both with chromatin in the HSP70 promoter and with mRNAs transcribed from this promoter under stress-induced conditions. Plays a limited role in the regulation of nuclear protein export. Modulates the nucleocytoplasmic transport of activated MAPK1/ERK2 and huntingtin/HTT and may serve as a docking site for the XPO1/CRM1-mediated nuclear export complex. Also plays a role as a structural and functional element of the perinuclear chromatin distribution; involved in the formation and/or maintenance of NPC-associated perinuclear heterochromatin exclusion zones (HEZs). Finally, acts as a spatial regulator of the spindle-assembly checkpoint (SAC) response ensuring a timely and effective recruitment of spindle checkpoint proteins like MAD1L1 and MAD2L1 to unattached kinetochore during the metaphase-anaphase transition before chromosome congression. Its N-terminus is involved in activation of oncogenic kinases. The protein is Nucleoprotein TPR of Mus musculus (Mouse).